Consider the following 416-residue polypeptide: Cell division control protein 3 (416 aa).

In terms of domain architecture, Septin-type G spans 32 to 307 (RGFSLNIMAI…ENYRTEKLKR (276 aa)). Positions 42–49 (GESGLGKA) are G1 motif. GTP is bound by residues 42-49 (GESGLGKA), S79, G105, 184-192 (KSDTLTDEE), G240, and R256. A G3 motif region spans residues 102–105 (TAPG). The G4 motif stretch occupies residues 183–186 (AKSD). Residues 323–399 (AAKQEEERAL…QLEKQKLLPQ (77 aa)) are a coiled coil. The segment at 392–416 (EKQKLLPQDPPAQPAPQKSRKGFLR) is disordered.

The protein belongs to the TRAFAC class TrmE-Era-EngA-EngB-Septin-like GTPase superfamily. Septin GTPase family.

It is found in the bud neck. In terms of biological role, plays a role in the cell cycle. Involved in the formation of the ring of filaments in the neck region at the mother-bud junction during mitosis. This is Cell division control protein 3 (CDC3) from Candida albicans (Yeast).